We begin with the raw amino-acid sequence, 386 residues long: S-adenosylmethionine synthase (386 aa).

Histidine 16 lines the ATP pocket. Mg(2+) is bound at residue aspartate 18. Glutamate 44 is a binding site for K(+). L-methionine-binding residues include glutamate 57 and glutamine 100. The segment at 100–110 (QSPDINVGVDQ) is flexible loop. ATP contacts are provided by residues 164-166 (DGK), 231-232 (RF), aspartate 240, 246-247 (RK), alanine 263, and lysine 267. L-methionine is bound at residue aspartate 240. Lysine 271 is a binding site for L-methionine.

Belongs to the AdoMet synthase family. Homotetramer; dimer of dimers. Requires Mg(2+) as cofactor. It depends on K(+) as a cofactor.

It localises to the cytoplasm. The catalysed reaction is L-methionine + ATP + H2O = S-adenosyl-L-methionine + phosphate + diphosphate. It participates in amino-acid biosynthesis; S-adenosyl-L-methionine biosynthesis; S-adenosyl-L-methionine from L-methionine: step 1/1. Functionally, catalyzes the formation of S-adenosylmethionine (AdoMet) from methionine and ATP. The overall synthetic reaction is composed of two sequential steps, AdoMet formation and the subsequent tripolyphosphate hydrolysis which occurs prior to release of AdoMet from the enzyme. This chain is S-adenosylmethionine synthase, found in Sulfurovum sp. (strain NBC37-1).